The following is a 106-amino-acid chain: L-rhamnose mutarotase (106 aa).

Y20 lines the substrate pocket. The active-site Proton donor is H24. Substrate contacts are provided by residues Y43 and 78–79 (WW).

This sequence belongs to the rhamnose mutarotase family. Homodimer.

Its subcellular location is the cytoplasm. The catalysed reaction is alpha-L-rhamnose = beta-L-rhamnose. It functions in the pathway carbohydrate metabolism; L-rhamnose metabolism. In terms of biological role, involved in the anomeric conversion of L-rhamnose. This Rhizobium johnstonii (strain DSM 114642 / LMG 32736 / 3841) (Rhizobium leguminosarum bv. viciae) protein is L-rhamnose mutarotase.